The chain runs to 139 residues: Non-structural protein 1 (139 aa).

The short motif at 136–139 (DLNS) is the DLNP; interaction with MAP1B element.

Belongs to the pneumovirus non-structural protein 1 family. Monomer. Homomultimer. Heteromultimer with NS2. Interacts with the matrix protein M. Interacts with host ELOC and CUL2; this interaction allows NS1 to form an active E3 ligase with ELOC and CUL2. Interacts with host IRF3; this interaction leads to the disrupted association of IRF3 with CREBBP and thus reduced binding of IRF3 to the IFN-beta promoter. Interacts with host MAVS; this interaction prevents MAVS binding to RIGI and inhibits signaling pathway leading to interferon production. Interacts with host MAP1B/microtubule-associated protein 1B. Interacts with host TRIM25 (via SPRY domain); this interaction suppresses RIGI ubiquitination and results in decreased interaction between RIGI and MAVS.

The protein localises to the host cytoplasm. It is found in the host mitochondrion. The protein resides in the host nucleus. Its function is as follows. Plays a major role in antagonizing the type I IFN-mediated antiviral response by degrading or inhibiting multiple cellular factors required for either IFN induction or response pathways. Acts cooperatively with NS2 to repress activation and nuclear translocation of host IFN-regulatory factor IRF3. Also disrupts the association of IRF3 with CREBBP. Interacts with host mitochondrial-associated membrane (MAM) MAVS and prevents the interaction with RIGI. Interacts with TRIM25 to suppress TRIM25-mediated RIGI ubiquitination and thereby RIGI-MAVS interaction. Together with NS2, participates in the proteasomal degradation of host STAT2, IRF3, IRF7, TBK1 and RIGI through a NS-degradasome involving CUL2 and Elongin-C. The degradasome requires an intact mitochondrial MAVS. Decreases the levels of host TRAF3 and IKBKE/IKK-epsilon. As functions other than disruptions of the type I IFN-mediated antiviral signaling pathways, induces host SOCS1 and SOCS3 expression. Suppresses premature apoptosis by an NF-kappa-B-dependent, interferon-independent mechanism and thus facilitates virus growth. Additionally, NS1 may serve some inhibitory role in viral transcription and RNA replication. Suppresses proliferation and activation of host CD103+ CD8+ cytotoxic T-lymphocytes and Th17 helper T-lymphocytes. The chain is Non-structural protein 1 (1C) from Homo sapiens (Human).